The primary structure comprises 420 residues: Dihydrolipoyllysine-residue succinyltransferase component of 2-oxoglutarate dehydrogenase complex (420 aa).

A Lipoyl-binding domain is found at methionine 1 to glycine 76. Lysine 42 is modified (N6-lipoyllysine). Residues valine 75 to alanine 201 are disordered. A compositionally biased stretch (polar residues) spans asparagine 81–serine 90. Basic and acidic residues predominate over residues serine 91–proline 102. Positions lysine 103–proline 127 are enriched in polar residues. A Peripheral subunit-binding (PSBD) domain is found at asparagine 124–glutamine 160. The segment covering aspartate 149–asparagine 158 has biased composition (basic and acidic residues). Residues serine 159–proline 188 show a composition bias toward low complexity. Catalysis depends on residues histidine 391 and aspartate 395.

The protein belongs to the 2-oxoacid dehydrogenase family. As to quaternary structure, forms a 24-polypeptide structural core with octahedral symmetry. Part of the 2-oxoglutarate dehydrogenase (OGDH) complex composed of E1 (2-oxoglutarate dehydrogenase), E2 (dihydrolipoamide succinyltransferase) and E3 (dihydrolipoamide dehydrogenase); the complex contains multiple copies of the three enzymatic components (E1, E2 and E3). (R)-lipoate is required as a cofactor.

The catalysed reaction is N(6)-[(R)-dihydrolipoyl]-L-lysyl-[protein] + succinyl-CoA = N(6)-[(R)-S(8)-succinyldihydrolipoyl]-L-lysyl-[protein] + CoA. Its pathway is amino-acid degradation; L-lysine degradation via saccharopine pathway; glutaryl-CoA from L-lysine: step 6/6. E2 component of the 2-oxoglutarate dehydrogenase (OGDH) complex which catalyzes the second step in the conversion of 2-oxoglutarate to succinyl-CoA and CO(2). The chain is Dihydrolipoyllysine-residue succinyltransferase component of 2-oxoglutarate dehydrogenase complex (odhB) from Staphylococcus epidermidis (strain ATCC 12228 / FDA PCI 1200).